A 79-amino-acid polypeptide reads, in one-letter code: uncharacterized protein (79 aa).

Residues 1-33 (MRFIIRTVMLIALVWIGLLLSGYGVLIGSKENA) form the signal peptide.

This is an uncharacterized protein from Escherichia coli O157:H7.